The chain runs to 195 residues: dTTP/UTP pyrophosphatase (195 aa).

Asp-70 functions as the Proton acceptor in the catalytic mechanism.

Belongs to the Maf family. YhdE subfamily. It depends on a divalent metal cation as a cofactor.

It is found in the cytoplasm. It carries out the reaction dTTP + H2O = dTMP + diphosphate + H(+). The catalysed reaction is UTP + H2O = UMP + diphosphate + H(+). Its function is as follows. Nucleoside triphosphate pyrophosphatase that hydrolyzes dTTP and UTP. May have a dual role in cell division arrest and in preventing the incorporation of modified nucleotides into cellular nucleic acids. In Methanococcoides burtonii (strain DSM 6242 / NBRC 107633 / OCM 468 / ACE-M), this protein is dTTP/UTP pyrophosphatase.